Reading from the N-terminus, the 206-residue chain is tRNA(Phe) 7-((3-amino-3-carboxypropyl)-4-demethylwyosine(37)-N(4))-methyltransferase 2 (206 aa).

It belongs to the TYW3 family.

The catalysed reaction is 4-demethyl-7-[(3S)-3-amino-3-carboxypropyl]wyosine(37) in tRNA(Phe) + S-adenosyl-L-methionine = 7-[(3S)-3-amino-3-carboxypropyl]wyosine(37) in tRNA(Phe) + S-adenosyl-L-homocysteine + H(+). Functionally, S-adenosyl-L-methionine-dependent methyltransferase that acts as a component of the wyosine derivatives biosynthesis pathway. Probably methylates N-4 position of wybutosine-86 to produce wybutosine-72. The chain is tRNA(Phe) 7-((3-amino-3-carboxypropyl)-4-demethylwyosine(37)-N(4))-methyltransferase 2 from Pyrococcus furiosus (strain ATCC 43587 / DSM 3638 / JCM 8422 / Vc1).